Consider the following 472-residue polypeptide: Carboxypeptidase Q (472 aa).

Residues 1 to 20 (MKFLIFAFFGGVHLLSLCSG) form the signal peptide. Positions 21–44 (KAICKNGISKRTFEEIKEEIASCG) are excised as a propeptide. 2 N-linked (GlcNAc...) asparagine glycosylation sites follow: Asn61 and Asn179. Residues His290 and Asp302 each coordinate Zn(2+). Glu336 (nucleophile) is an active-site residue. A Zn(2+)-binding site is contributed by Glu337. Asn353 and Asn356 each carry an N-linked (GlcNAc...) asparagine glycan. Asp364 is a binding site for Zn(2+). Asn396 carries N-linked (GlcNAc...) asparagine glycosylation. His434 provides a ligand contact to Zn(2+).

The protein belongs to the peptidase M28 family. Homodimer. The monomeric form is inactive while the homodimer is active. N-glycosylated. The secreted form is modified by hybrid or complex type oligosaccharide chains. In terms of tissue distribution, mainly detected in blood plasma. Abundant in placenta and kidney. Present at low level in muscles, liver and skin fibroblasts. Not detected in brain or white blood cells (at protein level).

The protein resides in the endoplasmic reticulum. It localises to the golgi apparatus. The protein localises to the lysosome. It is found in the secreted. Carboxypeptidase that may play an important role in the hydrolysis of circulating peptides. Catalyzes the hydrolysis of dipeptides with unsubstituted terminals into amino acids. May play a role in the liberation of thyroxine hormone from its thyroglobulin (Tg) precursor. The sequence is that of Carboxypeptidase Q (CPQ) from Homo sapiens (Human).